The chain runs to 304 residues: Voltage-dependent anion channel-forming protein YneE (304 aa).

4 helical membrane passes run 28-48, 50-70, 194-214, and 220-240; these read LLLNFLFSIAVIFMLPWYTHL, IKFTLAPFSILGVAIAIFLGF, VLAGCERIAYTPIPFAYTLIL, and LFCIMLPFALVVDLHYMTPFI.

It belongs to the anion channel-forming bestrophin (TC 1.A.46) family.

The protein localises to the cell membrane. This is Voltage-dependent anion channel-forming protein YneE (yneE) from Escherichia coli (strain K12).